The following is a 140-amino-acid chain: Large ribosomal subunit protein uL11 (140 aa).

It belongs to the universal ribosomal protein uL11 family. In terms of assembly, part of the ribosomal stalk of the 50S ribosomal subunit. Interacts with L10 and the large rRNA to form the base of the stalk. L10 forms an elongated spine to which L12 dimers bind in a sequential fashion forming a multimeric L10(L12)X complex. One or more lysine residues are methylated.

In terms of biological role, forms part of the ribosomal stalk which helps the ribosome interact with GTP-bound translation factors. In Symbiobacterium thermophilum (strain DSM 24528 / JCM 14929 / IAM 14863 / T), this protein is Large ribosomal subunit protein uL11.